The primary structure comprises 106 residues: PTS system N,N'-diacetylchitobiose-specific EIIB component (106 aa).

Positions 3-106 constitute a PTS EIIB type-3 domain; sequence KKHIYLFCSA…VAAIKKAAAN (104 aa). Cys10 acts as the Phosphocysteine intermediate in catalysis. Cys10 carries the post-translational modification Phosphocysteine; by EIIA.

As to quaternary structure, forms a complex with ChbA (EIIA). ChbB is a monomer in both its unphosphorylated and phosphorylated forms.

The protein localises to the cytoplasm. The enzyme catalyses N,N'-diacetylchitobiose(out) + N(pros)-phospho-L-histidyl-[protein] = diacetylchitobiose-6'-phosphate(in) + L-histidyl-[protein]. Functionally, the phosphoenolpyruvate-dependent sugar phosphotransferase system (sugar PTS), a major carbohydrate active transport system, catalyzes the phosphorylation of incoming sugar substrates concomitantly with their translocation across the cell membrane. The enzyme II ChbABC PTS system is involved in the transport of the chitin disaccharide N,N'-diacetylchitobiose (GlcNAc2). This chain is PTS system N,N'-diacetylchitobiose-specific EIIB component (chbB), found in Escherichia coli O157:H7.